Consider the following 439-residue polypeptide: Serine hydroxymethyltransferase (439 aa).

Residues leucine 134 and 138 to 140 contribute to the (6S)-5,6,7,8-tetrahydrofolate site; that span reads GHL. An N6-(pyridoxal phosphate)lysine modification is found at lysine 243.

This sequence belongs to the SHMT family. Homodimer. Pyridoxal 5'-phosphate is required as a cofactor.

The protein localises to the cytoplasm. It catalyses the reaction (6R)-5,10-methylene-5,6,7,8-tetrahydrofolate + glycine + H2O = (6S)-5,6,7,8-tetrahydrofolate + L-serine. The protein operates within one-carbon metabolism; tetrahydrofolate interconversion. It functions in the pathway amino-acid biosynthesis; glycine biosynthesis; glycine from L-serine: step 1/1. In terms of biological role, catalyzes the reversible interconversion of serine and glycine with tetrahydrofolate (THF) serving as the one-carbon carrier. This reaction serves as the major source of one-carbon groups required for the biosynthesis of purines, thymidylate, methionine, and other important biomolecules. Also exhibits THF-independent aldolase activity toward beta-hydroxyamino acids, producing glycine and aldehydes, via a retro-aldol mechanism. The sequence is that of Serine hydroxymethyltransferase from Brucella anthropi (strain ATCC 49188 / DSM 6882 / CCUG 24695 / JCM 21032 / LMG 3331 / NBRC 15819 / NCTC 12168 / Alc 37) (Ochrobactrum anthropi).